The chain runs to 192 residues: Large ribosomal subunit protein bL9 (192 aa).

A disordered region spans residues 172–192; the sequence is DALRPEDFFDPEADGVDEDEA. Residues 179–192 show a composition bias toward acidic residues; it reads FFDPEADGVDEDEA.

The protein belongs to the bacterial ribosomal protein bL9 family.

Its function is as follows. Binds to the 23S rRNA. This Rhizobium johnstonii (strain DSM 114642 / LMG 32736 / 3841) (Rhizobium leguminosarum bv. viciae) protein is Large ribosomal subunit protein bL9.